A 178-amino-acid polypeptide reads, in one-letter code: ATP synthase subunit b, chloroplastic (178 aa).

A helical membrane pass occupies residues 26–46; sequence TNLINIIILLIILFYFLKGLL.

This sequence belongs to the ATPase B chain family. F-type ATPases have 2 components, F(1) - the catalytic core - and F(0) - the membrane proton channel. F(1) has five subunits: alpha(3), beta(3), gamma(1), delta(1), epsilon(1). F(0) has four main subunits: a(1), b(1), b'(1) and c(10-14). The alpha and beta chains form an alternating ring which encloses part of the gamma chain. F(1) is attached to F(0) by a central stalk formed by the gamma and epsilon chains, while a peripheral stalk is formed by the delta, b and b' chains.

It is found in the plastid. The protein resides in the chloroplast thylakoid membrane. Its function is as follows. F(1)F(0) ATP synthase produces ATP from ADP in the presence of a proton or sodium gradient. F-type ATPases consist of two structural domains, F(1) containing the extramembraneous catalytic core and F(0) containing the membrane proton channel, linked together by a central stalk and a peripheral stalk. During catalysis, ATP synthesis in the catalytic domain of F(1) is coupled via a rotary mechanism of the central stalk subunits to proton translocation. In terms of biological role, component of the F(0) channel, it forms part of the peripheral stalk, linking F(1) to F(0). This is ATP synthase subunit b, chloroplastic from Vaucheria litorea (Yellow-green alga).